Reading from the N-terminus, the 772-residue chain is Ion-translocating oxidoreductase complex subunit C (772 aa).

4Fe-4S ferredoxin-type domains are found at residues 369-397 (GEPQ…QQLY) and 407-436 (KATT…VQYF). Residues C377, C380, C383, C387, C416, C419, C422, and C426 each contribute to the [4Fe-4S] cluster site. The segment at 599–748 (KARKLEQQQA…EPEEQVDPRK (150 aa)) is disordered.

The protein belongs to the 4Fe4S bacterial-type ferredoxin family. RnfC subfamily. The complex is composed of six subunits: RsxA, RsxB, RsxC, RsxD, RsxE and RsxG. [4Fe-4S] cluster serves as cofactor.

The protein resides in the cell inner membrane. Part of a membrane-bound complex that couples electron transfer with translocation of ions across the membrane. Required to maintain the reduced state of SoxR. In Shigella dysenteriae serotype 1 (strain Sd197), this protein is Ion-translocating oxidoreductase complex subunit C.